The chain runs to 376 residues: Queuine tRNA-ribosyltransferase (376 aa).

Asp89 acts as the Proton acceptor in catalysis. Substrate contacts are provided by residues 89–93 (DSGGF), Asp143, Gln194, and Gly221. The interval 252–258 (GVGLPSN) is RNA binding. The Nucleophile role is filled by Asp271. The RNA binding; important for wobble base 34 recognition stretch occupies residues 276-280 (ARNGR). Zn(2+)-binding residues include Cys309, Cys311, Cys314, and His340.

This sequence belongs to the queuine tRNA-ribosyltransferase family. As to quaternary structure, homodimer. Within each dimer, one monomer is responsible for RNA recognition and catalysis, while the other monomer binds to the replacement base PreQ1. Requires Zn(2+) as cofactor.

The enzyme catalyses 7-aminomethyl-7-carbaguanine + guanosine(34) in tRNA = 7-aminomethyl-7-carbaguanosine(34) in tRNA + guanine. It participates in tRNA modification; tRNA-queuosine biosynthesis. Catalyzes the base-exchange of a guanine (G) residue with the queuine precursor 7-aminomethyl-7-deazaguanine (PreQ1) at position 34 (anticodon wobble position) in tRNAs with GU(N) anticodons (tRNA-Asp, -Asn, -His and -Tyr). Catalysis occurs through a double-displacement mechanism. The nucleophile active site attacks the C1' of nucleotide 34 to detach the guanine base from the RNA, forming a covalent enzyme-RNA intermediate. The proton acceptor active site deprotonates the incoming PreQ1, allowing a nucleophilic attack on the C1' of the ribose to form the product. After dissociation, two additional enzymatic reactions on the tRNA convert PreQ1 to queuine (Q), resulting in the hypermodified nucleoside queuosine (7-(((4,5-cis-dihydroxy-2-cyclopenten-1-yl)amino)methyl)-7-deazaguanosine). The polypeptide is Queuine tRNA-ribosyltransferase (Clostridium tetani (strain Massachusetts / E88)).